Here is a 68-residue protein sequence, read N- to C-terminus: Large ribosomal subunit protein bL35 (68 aa).

Residues 29–68 are disordered; sequence GGVSHYNTKKSSKRKRQGRKPQYVPKNLEHKVKALLPNDV. The span at 35 to 47 shows a compositional bias: basic residues; it reads NTKKSSKRKRQGR.

It belongs to the bacterial ribosomal protein bL35 family.

The protein is Large ribosomal subunit protein bL35 of Sulfurihydrogenibium sp. (strain YO3AOP1).